The primary structure comprises 594 residues: SHC-transforming protein 3 (594 aa).

The interval 98–147 (GSCSAPSLAAPDGSAPSAPRAPAMSAARKGRPGDEPLPRPPRGAPHASDQ) is disordered. Low complexity predominate over residues 101 to 124 (SAPSLAAPDGSAPSAPRAPAMSAA). The PID domain occupies 149–334 (LGPGVTYVVK…LDEPWTEEEG (186 aa)). The interval 335 to 498 (DGSDHPYYNS…KMLEELQAET (164 aa)) is CH1. Disordered stretches follow at residues 351-373 (PPGG…AQFA) and 386-405 (GDTF…SSDI). Residues 393–405 (WQQTPLRQGSSDI) show a composition bias toward polar residues. At Ser402 the chain carries Phosphoserine. Positions 499–590 (WYQGEMSRKE…GSELCLQQPV (92 aa)) constitute an SH2 domain.

As to quaternary structure, interacts with the Trk receptors in a phosphotyrosine-dependent manner. Once activated, binds to GRB2. Interacts with activated EGF receptors. Post-translationally, tyrosine phosphorylated. Mainly expressed in brain. Hardly detectable in other tissues, except in pancreas. Highly expressed in the cerebral cortex, frontal and temporal lobes, occipital pole, hippocampus, caudate nucleus and amygdala. Expressed at low level in the cerebellum, medulla and spinal cord.

Functionally, signaling adapter that couples activated growth factor receptors to signaling pathway in neurons. Involved in the signal transduction pathways of neurotrophin-activated Trk receptors in cortical neurons. This is SHC-transforming protein 3 (SHC3) from Homo sapiens (Human).